The chain runs to 953 residues: Anion exchange protein 4 (953 aa).

Residues 20–41 (SEQLDGDLGPGSGLDGPSDIDN) are disordered. The next 4 helical transmembrane spans lie at 385–405 (AVLYIYLATVTNAITFGGLLG), 413–433 (GVLESFLGTAVAGATFCLMAG), 470–490 (VGIWVATFCLALVATEASLLV), and 501–521 (FCALISLIFIYDAVGKMLNLI). A membrane (anion exchange) region spans residues 385–953 (AVLYIYLATV…KAPEINISVN (569 aa)). N-linked (GlcNAc...) asparagine glycosylation is found at asparagine 546 and asparagine 570. The next 7 helical transmembrane spans lie at 594 to 614 (VPDIAFFSLLLFFTSFLCAIA), 635 to 655 (FSSVLAILLGCGLDAFLGLAT), 682 to 702 (PWWLSVAAALPALLLSILIFM), 728 to 748 (LFCVAVLMLFTSALGLPWYVS), 785 to 805 (GLVVFILTGVSIFLAPVLKFI), 807 to 827 (MPVLYGIFLYMGVAALSSMQF), and 869 to 889 (LWVIKSTPAAIVFPLMLLGLV). The span at 916–927 (KTIPENRPEPEH) shows a compositional bias: basic and acidic residues. The segment at 916–938 (KTIPENRPEPEHLFSGNDSENSE) is disordered. N-linked (GlcNAc...) asparagine glycans are attached at residues asparagine 932 and asparagine 949.

Belongs to the anion exchanger (TC 2.A.31) family. In terms of tissue distribution, expressed in kidney and gastrointestinal tract. In kidney, it is highly expressed in the cortex, expressed at intermediate level in the outer medulla and not expressed in the inner medulla. It is expressed in the cecum, while it is absent in other segments of gastrointestinal tract. Highly expressed in the cortical collecting duct (CCD). Expressed in both alpha-intercalated cells and beta-intercalated cells in the CCD (at protein level).

It is found in the basolateral cell membrane. The catalysed reaction is 2 hydrogencarbonate(out) + chloride(in) + Na(+)(out) = 2 hydrogencarbonate(in) + chloride(out) + Na(+)(in). It catalyses the reaction K(+)(in) + 2 hydrogencarbonate(in) + chloride(out) = K(+)(out) + 2 hydrogencarbonate(out) + chloride(in). It carries out the reaction Li(+)(in) + 2 hydrogencarbonate(in) + chloride(out) = Li(+)(out) + 2 hydrogencarbonate(out) + chloride(in). The enzyme catalyses Rb(+)(in) + 2 hydrogencarbonate(in) + chloride(out) = Rb(+)(out) + 2 hydrogencarbonate(out) + chloride(in). The catalysed reaction is Cs(+)(in) + 2 hydrogencarbonate(in) + chloride(out) = Cs(+)(out) + 2 hydrogencarbonate(out) + chloride(in). 4,4'-diisothiocyanatodihydrostilbene-2,2'- disulfonic acid (H2DIDS) potently inhibits chloride/hydrogencarbonate antiporter activity with 50% inhibition at about 5 uM. Completely inhibits chloride/hydrogencarbonate antiporter activity at 200 uM of 4,4'-diisothiocyano-trans-stilbene-2,2'-disulfonic acid (DIDS). In terms of biological role, electroneutral Cl(-)/HCO3(-) antiporter that favors chloride ion entry and efflux of hydrogencarbonate and sodium ion across the basolateral membrane and may participate in salivary secretion. Also mediates Cl(-)/HCO3(-) exchange activity in the presence of K(+) as well as Cs(+), Li(+), and Rb(+). Does not contribute to Cl(-)/HCO3(-) exchanger in the apical membrane of the upper villous epithelium. The chain is Anion exchange protein 4 from Rattus norvegicus (Rat).